We begin with the raw amino-acid sequence, 156 residues long: MKLQLIAVGTKMPKWVEEGYKEYSRRFPKDMPLELIEITAGKRGKNADIARILQKEGEAMLAAVPKGNRIVTLDIPGKPWNTEQLAEQLEVWKLDARDVSILIGGPEGLSPACKTAAEQSWSLSPLTLPHPLVRVVMAESLYRAWSITANHPYHRE.

S-adenosyl-L-methionine contacts are provided by residues Leu73, Gly104, and 123 to 128 (LSPLTL).

It belongs to the RNA methyltransferase RlmH family. As to quaternary structure, homodimer.

The protein resides in the cytoplasm. It catalyses the reaction pseudouridine(1915) in 23S rRNA + S-adenosyl-L-methionine = N(3)-methylpseudouridine(1915) in 23S rRNA + S-adenosyl-L-homocysteine + H(+). Specifically methylates the pseudouridine at position 1915 (m3Psi1915) in 23S rRNA. The polypeptide is Ribosomal RNA large subunit methyltransferase H (Aliivibrio salmonicida (strain LFI1238) (Vibrio salmonicida (strain LFI1238))).